The following is a 296-amino-acid chain: Elongation factor Ts (296 aa).

The involved in Mg(2+) ion dislocation from EF-Tu stretch occupies residues 79–82 (TDFV).

This sequence belongs to the EF-Ts family.

The protein localises to the cytoplasm. Associates with the EF-Tu.GDP complex and induces the exchange of GDP to GTP. It remains bound to the aminoacyl-tRNA.EF-Tu.GTP complex up to the GTP hydrolysis stage on the ribosome. In Acholeplasma laidlawii (strain PG-8A), this protein is Elongation factor Ts.